Consider the following 105-residue polypeptide: Synaptic plasticity regulator PANTS (105 aa).

The protein belongs to the UPF0545 family. Interacts with RTN4 isoform A/Nogo-A; the interaction results in enhanced RTN4-mediated inhibition of AMPA receptor clustering. Also interacts with NCAM1, RANBP2 and CCT8. Post-translationally, rapidly degraded by proteolysis following neuronal stimulation, resulting in increased AMPA receptor clustering.

It is found in the synapse. Its subcellular location is the synaptic cleft. Its function is as follows. Negatively regulates long-term potentiation and modulates adult synaptic plasticity. Stabilizes the interaction of RTN4 isoform A/Nogo-A with its receptors, inhibiting clustering of postsynaptic AMPA receptors at synaptic sites. Upon neuronal stimulation, degraded at synapses, reducing RTN4 signaling and allowing AMPA receptor clustering at individual synapses. This chain is Synaptic plasticity regulator PANTS (C22orf39), found in Homo sapiens (Human).